A 517-amino-acid chain; its full sequence is Aldehyde dehydrogenase X, mitochondrial (517 aa).

Residues 1 to 17 (MLRFLAPRLLSLQGRTA) constitute a mitochondrion transit peptide. Lys-51 bears the N6-acetyllysine mark. N6-acetyllysine; alternate is present on Lys-52. Lys-52 carries the post-translational modification N6-succinyllysine; alternate. N6-succinyllysine is present on Lys-81. An NAD(+)-binding site is contributed by 262 to 267 (GSTEVG). Residue Glu-285 is the Proton acceptor of the active site. Catalysis depends on Cys-319, which acts as the Nucleophile. N6-acetyllysine; alternate is present on residues Lys-364, Lys-383, Lys-399, Lys-414, and Lys-426. An N6-succinyllysine; alternate mark is found at Lys-364, Lys-383, Lys-399, Lys-414, and Lys-426. At Lys-429 the chain carries N6-acetyllysine.

This sequence belongs to the aldehyde dehydrogenase family. In terms of assembly, homotetramer. As to expression, liver, testis and to a lesser extent in brain.

Its subcellular location is the mitochondrion matrix. The enzyme catalyses an aldehyde + NAD(+) + H2O = a carboxylate + NADH + 2 H(+). Its pathway is alcohol metabolism; ethanol degradation; acetate from ethanol: step 2/2. Its function is as follows. ALDHs play a major role in the detoxification of alcohol-derived acetaldehyde. They are involved in the metabolism of corticosteroids, biogenic amines, neurotransmitters, and lipid peroxidation. This is Aldehyde dehydrogenase X, mitochondrial (ALDH1B1) from Homo sapiens (Human).